The chain runs to 901 residues: Pyruvate, phosphate dikinase (901 aa).

The interval 1–321 (MNIAKSIHFL…WLIEQKPVEA (321 aa)) is N-terminal. A linker 1 region spans residues 322 to 380 (KSTISLVRLLLDLYEREVVDAEYVVKSVKPGQLNEILHPVIDMTSVTGLKSSQGGIIGV). A central region spans residues 381–482 (PGAAVGRVYF…TINEGDFVTL (102 aa)). Position 440 is a phosphoserine; by PDRP1 (Ser-440). The active-site Tele-phosphohistidine intermediate is His-442. Residues 483–522 (NVPYYGESTLYMGAAQLIEPDPETSGLVSFIELAKGFVRS) are linker 2. The C-terminal stretch occupies residues 523-901 (FHVRANADSP…SAKSGGRRAR (379 aa)). Substrate-binding residues include Arg-550, Arg-606, Glu-750, Gly-771, Thr-772, Asn-773, and Asp-774. Glu-750 provides a ligand contact to Mg(2+). Asp-774 contacts Mg(2+). Catalysis depends on Cys-835, which acts as the Proton donor. The interval 879–901 (EKEGRKPAWRGRSSAKSGGRRAR) is disordered.

It belongs to the PEP-utilizing enzyme family. As to quaternary structure, homodimer. Requires Mg(2+) as cofactor. Phosphorylation of Ser-440 in the dark inactivates the enzyme. Dephosphorylation upon light stimulation reactivates the enzyme.

It catalyses the reaction pyruvate + phosphate + ATP = phosphoenolpyruvate + AMP + diphosphate + H(+). With respect to regulation, activated by light-induced dephosphorylation. Inhibited by dark-induced phosphorylation. Both reactions are catalyzed by PDRP1. Functionally, catalyzes the reversible phosphorylation of pyruvate and phosphate. The sequence is that of Pyruvate, phosphate dikinase (ppdK) from Treponema pallidum (strain Nichols).